The chain runs to 493 residues: Leucine-rich repeat-containing protein 14 (493 aa).

One copy of the LRR 1; degenerate repeat lies at 111 to 146 (KHALRVLDMTGLLDDGVEQDPGTMSMWDCTAAVART). An LRR 2; degenerate repeat occupies 194 to 218 (RLCCRDLRAEDLPMRNTVALLQLLD). An LRR 3; degenerate repeat occupies 219-246 (AGCLRRVDLRFNNLGLRGLSVIIPHVAR). Residues 247 to 282 (FQHLASLRLHYVHGDSRQPSVDGEDNFRYFLAQMGR) form an LRR 4; degenerate repeat. 5 LRR repeats span residues 283 to 307 (FTCL…LSTL), 308 to 339 (QSPL…AHLK), 340 to 360 (KLDL…QGLL), 364 to 391 (AATL…ILTQ), and 392 to 416 (CASL…LLRD).

Belongs to the PRAME family. LRRC14 subfamily. Interacts with IKBKB; disrupts IKBKB-IKBKG interaction preventing I-kappa-B-kinase (IKK) core complex formation and leading to a decrease of IKBKB phosphorylation and NF-kappaB activation. Interacts with CHUK.

It is found in the cytoplasm. Negatively regulates Toll-like receptor-mediated NF-kappa-B signaling by disrupting IKK core complex formation through interaction with IKBKB. This chain is Leucine-rich repeat-containing protein 14, found in Homo sapiens (Human).